A 536-amino-acid chain; its full sequence is Pre-mRNA-splicing regulator female-lethal(2)D (536 aa).

Residues 1 to 91 (MSVAAMTMDD…LQQQQQQQQQ (91 aa)) form a disordered region. Residues 28–39 (QNLNILNSSQNS) show a composition bias toward low complexity. The span at 57–69 (HHHHHPHPHHHHH) shows a compositional bias: basic residues. A compositionally biased stretch (low complexity) spans 72 to 91 (QQQQQQQQQHLQQQQQQQQQ). A coiled-coil region spans residues 254 to 319 (KSFSEEVKKS…KQAIKDEVVA (66 aa)). A disordered region spans residues 424 to 450 (APRTLPPKKSKLRGITTRRNSQLEEDH).

This sequence belongs to the fl(2)d family. Component of the WMM complex, a N6-methyltransferase complex composed of a catalytic subcomplex, named MAC, and of an associated subcomplex, named MACOM. The MAC subcomplex is composed of Ime4/Mettl3 and Mettl14. The MACOM subcomplex is composed of fl(2)d, Flacc/Xio, Hakai, vir, and, in some cases of nito. Interacts with vir and msk. Part of a complex containing fl(2)d, Sxl and vir.

It localises to the nucleus. In terms of biological role, associated component of the WMM complex, a complex that mediates N6-methyladenosine (m6A) methylation of mRNAs, a modification that plays a role in the efficiency of mRNA splicing and is required for sex determination. Required for sex determination and dosage compensation via Sxl alternative splicing: m6A methylation acts as a key regulator of Sxl pre-mRNA and promotes female-specific alternative splicing of Sxl, which determines female physiognomy. M6A methylation is also required for neuronal functions. Required for proper inclusion of regulated exons in Ubx transcripts, leading to isoforms Ia/b and IIa/b. This is Pre-mRNA-splicing regulator female-lethal(2)D from Drosophila melanogaster (Fruit fly).